A 386-amino-acid chain; its full sequence is Patatin-07 (386 aa).

Residues 1-23 (MATTKSFLILFFMILATTSSTCA) form the signal peptide. Residues 32–229 (LSIDGGGIKG…TVADPALLSV (198 aa)) enclose the PNPLA domain. Residues 36-41 (GGGIKG) carry the GXGXXG motif. The GXSXG motif lies at 75–79 (GTSTG). The Nucleophile role is filled by Ser77. Residues Asn115 and Asn202 are each glycosylated (N-linked (GlcNAc...) asparagine). Catalysis depends on Asp215, which acts as the Proton acceptor. Positions 215-217 (DGA) match the DGA/G motif.

Belongs to the patatin family. In terms of tissue distribution, tuber.

The protein resides in the vacuole. Probable lipolytic acyl hydrolase (LAH), an activity which is thought to be involved in the response of tubers to pathogens. In Solanum tuberosum (Potato), this protein is Patatin-07.